Here is a 464-residue protein sequence, read N- to C-terminus: UDP-glucose:undecaprenyl-phosphate glucose-1-phosphate transferase (464 aa).

Residues 1–15 (MTNLKKRERAKTNAS) are Cytoplasmic-facing. A helical membrane pass occupies residues 16–36 (LISMVQRFSDITIMFAGLWLV). At 37–38 (CE) the chain is on the periplasmic side. A helical membrane pass occupies residues 39–59 (VSGLSFLYMHLLVALITLVVF). The Cytoplasmic portion of the chain corresponds to 60 to 80 (QMLGGITDFYRSWRGVRAATE). A helical membrane pass occupies residues 81–101 (FALLLQNWTLSVIFSAGLVAF). Over 102–104 (NND) the chain is Periplasmic. A helical membrane pass occupies residues 105 to 125 (FDTQLKIWLAWYALTSIGLVV). Residues 126-278 (CRSCIRIGAG…VNRLLKRAED (153 aa)) lie on the Cytoplasmic side of the membrane. The chain crosses the membrane as a helical span at residues 279 to 299 (IVLATLILLLISPVLCCIALA). Topologically, residues 300–464 (VKLSSPGPVI…FKGFVNKAAY (165 aa)) are periplasmic.

It belongs to the bacterial sugar transferase family.

It localises to the cell inner membrane. The enzyme catalyses di-trans,octa-cis-undecaprenyl phosphate + UDP-alpha-D-glucose = alpha-D-glucosyl di-trans,octa-cis-undecaprenyl diphosphate + UMP. The protein operates within exopolysaccharide biosynthesis; colanic acid biosynthesis. In terms of biological role, is the initiating enzyme for colanic acid (CA) synthesis. Catalyzes the transfer of the glucose-1-phosphate moiety from UDP-Glc onto the carrier lipid undecaprenyl phosphate (C55-P), forming a phosphoanhydride bond yielding to glucosyl-pyrophosphoryl-undecaprenol (Glc-PP-C55). Also possesses a weak galactose-1-P transferase activity. This Escherichia coli (strain K12) protein is UDP-glucose:undecaprenyl-phosphate glucose-1-phosphate transferase (wcaJ).